We begin with the raw amino-acid sequence, 414 residues long: Multifunctional CCA protein (414 aa).

Residues Gly-8 and Arg-11 each contribute to the ATP site. Residues Gly-8 and Arg-11 each contribute to the CTP site. Mg(2+) contacts are provided by Asp-21 and Asp-23. Positions 91, 137, and 140 each coordinate ATP. 3 residues coordinate CTP: Arg-91, Arg-137, and Arg-140. The 102-residue stretch at 228–329 folds into the HD domain; the sequence is TGIHTLLTLA…LKLLDTIDVW (102 aa).

The protein belongs to the tRNA nucleotidyltransferase/poly(A) polymerase family. Bacterial CCA-adding enzyme type 1 subfamily. As to quaternary structure, monomer. Can also form homodimers and oligomers. It depends on Mg(2+) as a cofactor. The cofactor is Ni(2+).

It carries out the reaction a tRNA precursor + 2 CTP + ATP = a tRNA with a 3' CCA end + 3 diphosphate. It catalyses the reaction a tRNA with a 3' CCA end + 2 CTP + ATP = a tRNA with a 3' CCACCA end + 3 diphosphate. In terms of biological role, catalyzes the addition and repair of the essential 3'-terminal CCA sequence in tRNAs without using a nucleic acid template. Adds these three nucleotides in the order of C, C, and A to the tRNA nucleotide-73, using CTP and ATP as substrates and producing inorganic pyrophosphate. tRNA 3'-terminal CCA addition is required both for tRNA processing and repair. Also involved in tRNA surveillance by mediating tandem CCA addition to generate a CCACCA at the 3' terminus of unstable tRNAs. While stable tRNAs receive only 3'-terminal CCA, unstable tRNAs are marked with CCACCA and rapidly degraded. The chain is Multifunctional CCA protein from Edwardsiella ictaluri (strain 93-146).